Reading from the N-terminus, the 55-residue chain is Large ribosomal subunit protein bL33B (55 aa).

This sequence belongs to the bacterial ribosomal protein bL33 family.

This chain is Large ribosomal subunit protein bL33B, found in Salinispora tropica (strain ATCC BAA-916 / DSM 44818 / JCM 13857 / NBRC 105044 / CNB-440).